We begin with the raw amino-acid sequence, 75 residues long: UPF0352 protein YejL (75 aa).

The protein belongs to the UPF0352 family.

This chain is UPF0352 protein YejL, found in Shigella sonnei (strain Ss046).